The sequence spans 173 residues: Glucagon family neuropeptides (173 aa).

Positions 1–22 (MSSKATLALLIYGIIMHYSVYS) are cleaved as a signal peptide. Residues 23–80 (SPLGLNYPNLRLENEVYDEDGNSLPALAFDSDQIAIRSPPSVADDLYTLYYPPEKGTE) constitute a propeptide that is removed on maturation. A Lysine amide modification is found at K166. Residues 170-173 (LGYL) constitute a propeptide that is removed on maturation.

Belongs to the glucagon family.

The protein localises to the secreted. In terms of biological role, primary role of GHRH is to release GH from the pituitary. Functionally, PACAP plays pivotal roles as a neurotransmitter and/or a neuromodulator. The sequence is that of Glucagon family neuropeptides from Oncorhynchus nerka (Sockeye salmon).